Reading from the N-terminus, the 77-residue chain is Translation initiation factor IF-1, chloroplastic (77 aa).

Residues 1 to 71 form the S1-like domain; sequence MKEQKWIHEG…TRGRIIYRLR (71 aa).

It belongs to the IF-1 family. In terms of assembly, component of the 30S ribosomal translation pre-initiation complex which assembles on the 30S ribosome in the order IF-2 and IF-3, IF-1 and N-formylmethionyl-tRNA(fMet); mRNA recruitment can occur at any time during PIC assembly.

Its subcellular location is the plastid. It is found in the chloroplast. Functionally, one of the essential components for the initiation of protein synthesis. Stabilizes the binding of IF-2 and IF-3 on the 30S subunit to which N-formylmethionyl-tRNA(fMet) subsequently binds. Helps modulate mRNA selection, yielding the 30S pre-initiation complex (PIC). Upon addition of the 50S ribosomal subunit IF-1, IF-2 and IF-3 are released leaving the mature 70S translation initiation complex. The polypeptide is Translation initiation factor IF-1, chloroplastic (Lactuca sativa (Garden lettuce)).